The primary structure comprises 862 residues: Phosphatidic acid phosphohydrolase 1 (862 aa).

Residues 19-104 (NPATLSGAID…VPDELLVSPV (86 aa)) form an N-LIP region. 2 disordered regions span residues 104–183 (VMSA…SVEE) and 300–341 (GSTL…AGSG). Positions 105-117 (MSATSSPPQSPET) are enriched in polar residues. Residues Ser-110 and Ser-114 each carry the phosphoserine modification. Residues 132 to 143 (NENKKKEKKVLE) show a composition bias toward basic and acidic residues. Low complexity-rich tracts occupy residues 161-179 (SETTGSLSPTESSTTTPPD) and 300-313 (GSTLNSLSSSPSGS). A Phosphoserine modification is found at Ser-168. A DXDXT motif motif is present at residues 398–402 (DIDGT). The residue at position 496 (Lys-496) is an N6-acetyllysine. A Phosphoserine modification is found at Ser-511. Ser-602 carries the phosphoserine; by CDC28 modification. Positions 648–732 (SDISNDDSDN…TPNKSTMSKG (85 aa)) are disordered. Over residues 651 to 663 (SNDDSDNIDEDTD) the composition is skewed to acidic residues. 2 stretches are compositionally biased toward polar residues: residues 664–679 (VSQQSNISRNRANSVK) and 687–699 (PQRNVSGSTNNNE). Residues 710–730 (ASDLVSSHSSSGSTPNKSTMS) show a composition bias toward low complexity. Residue Thr-723 is modified to Phosphothreonine; by CDC28. Ser-744 is modified (phosphoserine; by CDC28). Ser-748, Ser-773, and Ser-774 each carry phosphoserine. Positions 757–780 (MDDEDSNYNRTKSRRASSAAATSI) are disordered. Lys-801 carries the post-translational modification N6-acetyllysine. A disordered region spans residues 807–862 (DVHSLGNSDTESRREQSVNETGRNQLPHNSMDDKDLDSRVSDEFDDDEFDEDEFED). Phosphoserine is present on residues Ser-810 and Ser-814. At Thr-816 the chain carries Phosphothreonine. A compositionally biased stretch (polar residues) spans 824–834 (VNETGRNQLPH). Positions 836-848 (SMDDKDLDSRVSD) are enriched in basic and acidic residues. Phosphoserine is present on residues Ser-844 and Ser-847. Acidic residues predominate over residues 849 to 862 (EFDDDEFDEDEFED).

It belongs to the lipin family. It depends on Mg(2+) as a cofactor. In terms of processing, acetylation at Lys-496 and Lys-801 by ESA1 promotes synthesis of diacylglycerol. Phosphorylated by CDC28 at the onset of mitosis, and dephosphorylated by the NEM1-SPO7 complex. Phosphorylation regulates recruitment on promoters of lipid biosynthetic enzymes.

The protein localises to the cytoplasm. It is found in the nucleus membrane. Its subcellular location is the endoplasmic reticulum membrane. It catalyses the reaction a 1,2-diacyl-sn-glycero-3-phosphate + H2O = a 1,2-diacyl-sn-glycerol + phosphate. Its activity is regulated as follows. Phenylglyoxal and propranolol inhibit activity in dose-dependent manners with IC(50) values of 1.3 mM and 0.2 mM, respectively. Sertraline inhibits activity in a dose-dependent manner with an IC(50) value of 85 uM; the inhibitory effects of sertraline and propranolol are additive. Mg(2+)-dependent phosphatidate (PA) phosphatase which catalyzes the dephosphorylation of PA to yield diacylglycerol. Required for de novo lipid synthesis and formation of lipid droplets. Controls transcription of phospholipid biosynthetic genes and nuclear structure by regulating the amount of membrane present at the nuclear envelope. Involved in plasmid maintenance, in respiration and in cell proliferation. The chain is Phosphatidic acid phosphohydrolase 1 (PAH1) from Saccharomyces cerevisiae (strain ATCC 204508 / S288c) (Baker's yeast).